A 452-amino-acid polypeptide reads, in one-letter code: 1,4-beta-D-glucan cellobiohydrolase A (452 aa).

A signal peptide spans 1-17 (MHQRALLFSALLTAVRA). Asn-62 carries an N-linked (GlcNAc...) asparagine glycan. The active-site Nucleophile is Glu-227. Glu-232 serves as the catalytic Proton donor. Asn-285, Asn-335, Asn-402, and Asn-445 each carry an N-linked (GlcNAc...) asparagine glycan.

Belongs to the glycosyl hydrolase 7 (cellulase C) family.

Its subcellular location is the secreted. The enzyme catalyses Hydrolysis of (1-&gt;4)-beta-D-glucosidic linkages in cellulose and cellotetraose, releasing cellobiose from the non-reducing ends of the chains.. Its function is as follows. The biological conversion of cellulose to glucose generally requires three types of hydrolytic enzymes: (1) Endoglucanases which cut internal beta-1,4-glucosidic bonds; (2) Exocellobiohydrolases that cut the disaccharide cellobiose from the non-reducing end of the cellulose polymer chain; (3) Beta-1,4-glucosidases which hydrolyze the cellobiose and other short cello-oligosaccharides to glucose. The polypeptide is 1,4-beta-D-glucan cellobiohydrolase A (cbhA) (Aspergillus niger).